The following is a 607-amino-acid chain: Elongation factor 4 (607 aa).

Residues 11–193 enclose the tr-type G domain; the sequence is SKIRNFSIIA…QIVEKVPAPA (183 aa). GTP contacts are provided by residues 23–28 and 140–143; these read DHGKST and NKID.

This sequence belongs to the TRAFAC class translation factor GTPase superfamily. Classic translation factor GTPase family. LepA subfamily.

It localises to the cell membrane. The catalysed reaction is GTP + H2O = GDP + phosphate + H(+). In terms of biological role, required for accurate and efficient protein synthesis under certain stress conditions. May act as a fidelity factor of the translation reaction, by catalyzing a one-codon backward translocation of tRNAs on improperly translocated ribosomes. Back-translocation proceeds from a post-translocation (POST) complex to a pre-translocation (PRE) complex, thus giving elongation factor G a second chance to translocate the tRNAs correctly. Binds to ribosomes in a GTP-dependent manner. This Bacillus cereus (strain ATCC 14579 / DSM 31 / CCUG 7414 / JCM 2152 / NBRC 15305 / NCIMB 9373 / NCTC 2599 / NRRL B-3711) protein is Elongation factor 4.